The sequence spans 588 residues: MAVSVFSGVRLLSIGDANGDIQRHSEQQPLRLEIKMNQDAAQIILSNNEETCVFKCTVLRETECSRVGKQSFIITLGCNSVLLQFASPADFSSFYNLLKICRGQKGDRSVFSDRTEESSAVQYFQFYGYLSQQQNMMQDYVRTGTYQRAILQNHTDFKDKVVLDVGCGSGILSFFAAQAGARKVYAVEASTMAQHAEVLVNSNRLSERVVVIPGKVEEVSLPEQVDIIISEPMGYMLFNERMLESYLHAKKFLKPSGKMFPTIGDVHLAPFTDEQLYMEQFTKANFWYQPSFHGVDLSALRGAAVDEYFRQPIVDTFDIRILMAKSVKYTVNFLEAKEEDLYKIEIPFKFHMMHSGLVHGLAFWFDVAFIGSVMTVWLSTAPTEPLTHWYQVRCLLQSPLFAKAGDTMSGTALLIANKRQSYDISIVAQVDQTGSKSSNLLDLKNPFFRYTGTTPAPPPGSHYSSPSENMWNTGGTYSMSQGMAVSGMPTAYDLSTVIGGSGTTVSHNNLIPLGTDTHALNTGIVNHTHSRMGSIMSTGIVQGATTAQQGPSSASLHYPVTNQFTMGGPAISMASPMAIPSNTMHYGS.

In terms of domain architecture, SAM-dependent MTase PRMT-type spans 120–427 (AVQYFQFYGY…KRQSYDISIV (308 aa)). 6 residues coordinate S-adenosyl-L-methionine: Gln-133, Arg-142, Gly-166, Glu-188, Glu-217, and Ser-245. The tract at residues 473–588 (TGGTYSMSQG…IPSNTMHYGS (116 aa)) is transactivation domain.

Belongs to the class I-like SAM-binding methyltransferase superfamily. Protein arginine N-methyltransferase family. As to quaternary structure, homodimer.

Its subcellular location is the nucleus. The protein resides in the cytoplasm. It is found in the chromosome. The enzyme catalyses L-arginyl-[protein] + 2 S-adenosyl-L-methionine = N(omega),N(omega)-dimethyl-L-arginyl-[protein] + 2 S-adenosyl-L-homocysteine + 2 H(+). Functionally, methylates (mono- and asymmetric dimethylation) the guanidino nitrogens of arginyl residues in several proteins involved in DNA packaging, transcription regulation, pre-mRNA splicing, and mRNA stability. Recruited to promoters upon gene activation together with histone acetyltransferases from EP300/P300 and p160 families, methylates histone H3 at 'Arg-17' (H3R17me) and activates transcription via chromatin remodeling. The polypeptide is Histone-arginine methyltransferase CARM1 (carm1) (Danio rerio (Zebrafish)).